Consider the following 129-residue polypeptide: MKGMFFCARAVVPFMKKSKDGAIVNVGSIAGITGAGSSMPYAVSKSAVHGLTKSLAHALAPEIRVSGVAPGAVATRWWAGREEKMKSMIGSLLLQCIAEPDDVAKLICSLIEQESLTGQIITIDSGQTL.

This sequence belongs to the short-chain dehydrogenases/reductases (SDR) family.

The polypeptide is Short-chain dehydrogenase/reductase homolog YusR (yusR) (Bacillus subtilis (strain 168)).